The primary structure comprises 245 residues: Ribonuclease PH (245 aa).

Residues Arg87 and 125 to 127 contribute to the phosphate site; that span reads GTR.

It belongs to the RNase PH family. Homohexameric ring arranged as a trimer of dimers.

The enzyme catalyses tRNA(n+1) + phosphate = tRNA(n) + a ribonucleoside 5'-diphosphate. Functionally, phosphorolytic 3'-5' exoribonuclease that plays an important role in tRNA 3'-end maturation. Removes nucleotide residues following the 3'-CCA terminus of tRNAs; can also add nucleotides to the ends of RNA molecules by using nucleoside diphosphates as substrates, but this may not be physiologically important. Probably plays a role in initiation of 16S rRNA degradation (leading to ribosome degradation) during starvation. The polypeptide is Ribonuclease PH (Streptomyces coelicolor (strain ATCC BAA-471 / A3(2) / M145)).